Reading from the N-terminus, the 428-residue chain is Enolase (428 aa).

Glutamine 163 is a binding site for (2R)-2-phosphoglycerate. Glutamate 205 (proton donor) is an active-site residue. Positions 242, 285, and 312 each coordinate Mg(2+). The (2R)-2-phosphoglycerate site is built by lysine 337, arginine 366, serine 367, and lysine 388. The Proton acceptor role is filled by lysine 337.

It belongs to the enolase family. Requires Mg(2+) as cofactor.

It is found in the cytoplasm. It localises to the secreted. The protein localises to the cell surface. It carries out the reaction (2R)-2-phosphoglycerate = phosphoenolpyruvate + H2O. It functions in the pathway carbohydrate degradation; glycolysis; pyruvate from D-glyceraldehyde 3-phosphate: step 4/5. Its function is as follows. Catalyzes the reversible conversion of 2-phosphoglycerate (2-PG) into phosphoenolpyruvate (PEP). It is essential for the degradation of carbohydrates via glycolysis. The chain is Enolase from Novosphingobium aromaticivorans (strain ATCC 700278 / DSM 12444 / CCUG 56034 / CIP 105152 / NBRC 16084 / F199).